We begin with the raw amino-acid sequence, 124 residues long: Putative B3 domain-containing protein At1g51970 (124 aa).

The segment at residues 18-124 is a DNA-binding region (TF-B3); the sequence is VLKKNLTESD…SRRFLFHHIN (107 aa).

Its subcellular location is the nucleus. The polypeptide is Putative B3 domain-containing protein At1g51970 (Arabidopsis thaliana (Mouse-ear cress)).